The primary structure comprises 101 residues: Small ribosomal subunit protein uS14 (101 aa).

The protein belongs to the universal ribosomal protein uS14 family. In terms of assembly, part of the 30S ribosomal subunit. Contacts proteins S3 and S10.

In terms of biological role, binds 16S rRNA, required for the assembly of 30S particles and may also be responsible for determining the conformation of the 16S rRNA at the A site. The chain is Small ribosomal subunit protein uS14 from Polaromonas naphthalenivorans (strain CJ2).